Reading from the N-terminus, the 503-residue chain is MSEQNHPQTEPQLDENQIIALRREKLHNIRQQRNAYPNDFKRDSFAADLHAQYGEIGKEELDPQGIPVKVAGRMMLKRQMGKASFATIQDVSGQIQLYLNNKGVSQEVLDDFNHWDLGDIVGAEGTLFKTNHGELTVRVSGIRLLSKSLRPLPDKHKGLSDQETKYRQRYVDLIANEESRNTFIKRSQIIQSVRNFMVGEHYLEVETPMMHPIPGGATAKPFVTHHNALDIPLYLRIAPELYLKRLVVGGLERVFEINRSFRNEGMSVRHNPEFTMIEFYEAFSDYERMMQMAEDIIRNASRTVNGTANITYNGKEVDLESPFERLTILEAIKKYNPHYTDEQLNDAEWLKKEIVKHGESLPPSPGIGSLQLALFEGCAEGKLWNPTFIVDYPVEVSPLARASDTKQGLTERFELFVVGRELANGYSELNDPEDQAERFKAQVVQKDAGDDEAMHYDADYIRAMEFGLPPTGGCGIGIDRLVMLLTDSQTIRDVILFPQMRPE.

Mg(2+) contacts are provided by Glu414 and Glu421.

Belongs to the class-II aminoacyl-tRNA synthetase family. As to quaternary structure, homodimer. Requires Mg(2+) as cofactor.

It is found in the cytoplasm. It carries out the reaction tRNA(Lys) + L-lysine + ATP = L-lysyl-tRNA(Lys) + AMP + diphosphate. The sequence is that of Lysine--tRNA ligase from Neisseria meningitidis serogroup B (strain ATCC BAA-335 / MC58).